The chain runs to 362 residues: NAD(P)H-quinone oxidoreductase subunit 1, chloroplastic (362 aa).

8 helical membrane passes run 29-49 (ILPI…IVWL), 103-123 (IAVI…HFVL), 128-148 (IGVF…LMAG), 164-184 (AAQS…ISLL), 202-222 (FFGW…ISSL), 247-267 (YSGI…LVSS), 303-323 (TIGI…SITI), and 335-355 (LLNL…LLTT).

The protein belongs to the complex I subunit 1 family. As to quaternary structure, NDH is composed of at least 16 different subunits, 5 of which are encoded in the nucleus.

It is found in the plastid. The protein resides in the chloroplast thylakoid membrane. It carries out the reaction a plastoquinone + NADH + (n+1) H(+)(in) = a plastoquinol + NAD(+) + n H(+)(out). The enzyme catalyses a plastoquinone + NADPH + (n+1) H(+)(in) = a plastoquinol + NADP(+) + n H(+)(out). In terms of biological role, NDH shuttles electrons from NAD(P)H:plastoquinone, via FMN and iron-sulfur (Fe-S) centers, to quinones in the photosynthetic chain and possibly in a chloroplast respiratory chain. The immediate electron acceptor for the enzyme in this species is believed to be plastoquinone. Couples the redox reaction to proton translocation, and thus conserves the redox energy in a proton gradient. This chain is NAD(P)H-quinone oxidoreductase subunit 1, chloroplastic, found in Agrostis stolonifera (Creeping bentgrass).